Reading from the N-terminus, the 702-residue chain is Elongation factor G (702 aa).

Residues Glu8–Ser196 form the tr-type G domain. GTP contacts are provided by residues Ala17–Thr24, Asp88–His92, and Asn142–Asp145.

The protein belongs to the TRAFAC class translation factor GTPase superfamily. Classic translation factor GTPase family. EF-G/EF-2 subfamily.

It localises to the cytoplasm. Functionally, catalyzes the GTP-dependent ribosomal translocation step during translation elongation. During this step, the ribosome changes from the pre-translocational (PRE) to the post-translocational (POST) state as the newly formed A-site-bound peptidyl-tRNA and P-site-bound deacylated tRNA move to the P and E sites, respectively. Catalyzes the coordinated movement of the two tRNA molecules, the mRNA and conformational changes in the ribosome. The chain is Elongation factor G (fusA) from Thiomonas delicata (Thiomonas cuprina).